Here is an 861-residue protein sequence, read N- to C-terminus: Leucine--tRNA ligase (861 aa).

The 'HIGH' region motif lies at 42–52 (PYPSGRIHMGH). Positions 623–627 (KMSKS) match the 'KMSKS' region motif. Lys-626 provides a ligand contact to ATP.

Belongs to the class-I aminoacyl-tRNA synthetase family.

The protein resides in the cytoplasm. It carries out the reaction tRNA(Leu) + L-leucine + ATP = L-leucyl-tRNA(Leu) + AMP + diphosphate. This Caulobacter vibrioides (strain ATCC 19089 / CIP 103742 / CB 15) (Caulobacter crescentus) protein is Leucine--tRNA ligase.